The primary structure comprises 900 residues: Translation initiation factor IF-2 (900 aa).

The disordered stretch occupies residues 48–310; that stretch reads HLNRDRGNAP…KPSSLQQSFN (263 aa). The segment covering 68 to 82 has biased composition (polar residues); that stretch reads STLNVPSTGGKSKSV. 2 stretches are compositionally biased toward basic and acidic residues: residues 85–98 and 108–164; these read EVRK…RDPI and QARR…KEKV. Positions 165 to 176 are enriched in polar residues; it reads TNQQNENMTKPA. Positions 177 to 237 are enriched in basic and acidic residues; that stretch reads QSEKAKREAE…SATKPEESAD (61 aa). Residues 263-277 show a composition bias toward basic residues; that stretch reads TRTRAAKVTKQKKGN. Residues 278–291 show a composition bias toward basic and acidic residues; that stretch reads RQSESKADREEARA. Positions 399–568 constitute a tr-type G domain; that stretch reads FRAPVVTIMG…LLQAEVLELK (170 aa). The segment at 408 to 415 is G1; sequence GHVDHGKT. 408–415 provides a ligand contact to GTP; sequence GHVDHGKT. Residues 433–437 form a G2 region; it reads GITQH. Positions 454–457 are G3; sequence DTPG. Residues 454 to 458 and 508 to 511 each bind GTP; these read DTPGH and NKID. The interval 508-511 is G4; the sequence is NKID. The tract at residues 544–546 is G5; sequence SAK.

The protein belongs to the TRAFAC class translation factor GTPase superfamily. Classic translation factor GTPase family. IF-2 subfamily.

The protein localises to the cytoplasm. Its function is as follows. One of the essential components for the initiation of protein synthesis. Protects formylmethionyl-tRNA from spontaneous hydrolysis and promotes its binding to the 30S ribosomal subunits. Also involved in the hydrolysis of GTP during the formation of the 70S ribosomal complex. This chain is Translation initiation factor IF-2, found in Pectobacterium atrosepticum (strain SCRI 1043 / ATCC BAA-672) (Erwinia carotovora subsp. atroseptica).